The chain runs to 365 residues: Potassium channel subfamily K member 9 (365 aa).

Over 1–8 (MKKQNVRT) the chain is Cytoplasmic. A helical transmembrane segment spans residues 9 to 29 (LSLIACTFTYLLVGAAVFDAL). Over 30–88 (ESDHEMREEEKLKAEEIRIRGKYNISTEDYRQLELVILQSEPHRAGVQWKFAGSFYFAI) the chain is Extracellular. Asparagine 53 carries N-linked (GlcNAc...) asparagine glycosylation. The pore-forming intramembrane region spans 89-101 (TVITTIGYGHAAP). K(+) is bound by residues threonine 93, isoleucine 94, glycine 95, and tyrosine 96. The segment at 93–98 (TIGYGH) is selectivity filter 1. Over 102–107 (GTDAGK) the chain is Extracellular. Residues 108–128 (AFCMFYAVLGIPLTLVMFQSL) traverse the membrane as a helical segment. Topologically, residues 129 to 158 (GERMNTFVRYLLKRIKKCCGMRNTEVSMEN) are cytoplasmic. Residues 159-179 (MVTVGFFSCMGTLCIGAAAFS) traverse the membrane as a helical segment. The Extracellular segment spans residues 180–194 (QCEEWSFFHAYYYCF). An intramembrane region (pore-forming) is located at residues 195-207 (ITLTTIGFGDYVA). Residues threonine 199, isoleucine 200, glycine 201, and phenylalanine 202 each contribute to the K(+) site. The selectivity filter 2 stretch occupies residues 199–204 (TIGFGD). At 208–218 (LQSKGALQRKP) the chain is on the extracellular side. A helical membrane pass occupies residues 219 to 239 (FYVAFSFMYILVGLTVIGAFL). At 240 to 365 (NLVVLRFLTM…HRLMLRRKSV (126 aa)) the chain is on the cytoplasmic side. Positions 243-248 (VLRFLT) are X-gate.

It belongs to the two pore domain potassium channel (TC 1.A.1.8) family. Homodimer. Heterodimer with KCNK1. Heterodimer with KCNK3. As to expression, highly expressed in the brain.

The protein localises to the cell membrane. The protein resides in the mitochondrion inner membrane. It is found in the cell projection. Its subcellular location is the dendrite. It catalyses the reaction K(+)(in) = K(+)(out). The catalysed reaction is Na(+)(in) = Na(+)(out). With respect to regulation, inhibited by extracellular acidification. K(+) channel that conducts voltage-dependent outward rectifying currents upon membrane depolarization. Voltage sensing is coupled to K(+) electrochemical gradient in an 'ion flux gating' mode where outward but not inward ion flow opens the gate. Changes ion selectivity and becomes permeable to Na(+) ions in response to extracellular acidification. Protonation of the pH sensor His-98 stabilizes C-type inactivation conformation likely converting the channel from outward K(+)-conducting, to inward Na(+)-conducting to nonconductive state. Homo- and heterodimerizes to form functional channels with distinct regulatory and gating properties. Allows K(+) currents with fast-gating kinetics important for the repolarization and hyperpolarization phases of action potentials. In granule neurons, hyperpolarizes the resting membrane potential to limit intrinsic neuronal excitability, but once the action potential threshold is reached, supports high-frequency action potential firing and increased neuronal excitability. Homomeric and/or heteromeric KCNK3:KCNK9 channels operate in cerebellar granule cells, whereas heteromeric KCNK1:KCNK9 enables currents in hippocampal dentate gyrus granule neurons. Dispensable for central chemosensory respiration i.e. breathing controlled by brainstem CO2/pH, it rather conducts pH-sensitive currents and controls the firing rate of serotonergic raphe neurons involved in potentiation of the respiratory chemoreflex. In retinal ganglion cells, mediates outward rectifying currents that regulate action potentials in response to acidification of the synaptic cleft. Involved in transmission of image-forming and nonimage-forming visual information in the retina. In adrenal gland, contributes to the maintenance of a hyperpolarized resting membrane potential of aldosterone-producing cells at zona glomerulosa and limits aldosterone release as part of a regulatory mechanism that controls arterial blood pressure and electrolyte homeostasis. This Cavia porcellus (Guinea pig) protein is Potassium channel subfamily K member 9 (KCNK9).